The chain runs to 149 residues: Stathmin (149 aa).

Residue alanine 2 is modified to N-acetylalanine. Phosphoserine is present on serine 4. One can recognise an SLD domain in the interval 4–145 (SDIQVKELEK…NKESKDPADE (142 aa)). Position 9 is an N6-acetyllysine (lysine 9). Position 16 is a phosphoserine (serine 16). A Phosphoserine; by CDK1, MAPK1 and MAPK3 modification is found at serine 25. Lysine 29 carries the N6-methyllysine modification. Phosphoserine is present on serine 31. Serine 38 carries the phosphoserine; by CDK1, MAPK1 and MAPK3 modification. The stretch at 41 to 140 (KKKDLSLEEI…EEVRKNKESK (100 aa)) forms a coiled coil. Serine 63 bears the Phosphoserine; by PKA mark. Lysine 100 and lysine 119 each carry N6-acetyllysine. Residues 121–143 (ERLREKDKHIEEVRKNKESKDPA) show a composition bias toward basic and acidic residues. Positions 121 to 149 (ERLREKDKHIEEVRKNKESKDPADETEAD) are disordered.

It belongs to the stathmin family. As to quaternary structure, binds to two alpha/beta-tubulin heterodimers. Interacts with KIST. In terms of processing, many different phosphorylated forms are observed depending on specific combinations among the sites which can be phosphorylated. MAPK is responsible for the phosphorylation of stathmin in response to NGF. Phosphorylation at Ser-16 seems to be required for neuron polarization.

It localises to the cytoplasm. The protein localises to the cytoskeleton. Its function is as follows. Involved in the regulation of the microtubule (MT) filament system by destabilizing microtubules. Prevents assembly and promotes disassembly of microtubules. Its phosphorylation at Ser-16 may be required for axon formation during neurogenesis. Involved in the control of the learned and innate fear. This Bos taurus (Bovine) protein is Stathmin (STMN1).